The primary structure comprises 270 residues: MDHAARPGRFFGVYLLYCQNPRHRGRVYVGFTVNPARRVRQHNAGRKKGGAWRTSGRGPWDMVLIIHGFPSAVAALRFEWAWQHPQASRRLTHVGPRLRSEAAFAFHLRVLAHMLRVPPWVRLPLTLRWLRPDFRHELCPAPPAHMPIAFGPPPPQPLVPKRPAVSEADSERQLDLGTKARCSLCARLLQDEEGPLCCPHPGCPLRAHIICLAEEFLQEEPGQLLPLEGHCPSCKKSLLWGNLVGQCHADTEEEEDLELEEEHWTDLLET.

The 86-residue stretch at 9-94 (RFFGVYLLYC…PQASRRLTHV (86 aa)) folds into the GIY-YIG domain. The segment at 182-234 (CSLCARLLQDEEGPLCCPHPGCPLRAHIICLAEEFLQEEPGQLLPLEGHCPSC) adopts an SLX1-type zinc-finger fold.

This sequence belongs to the SLX1 family. In terms of assembly, forms a heterodimer with SLX4. The cofactor is a divalent metal cation. As to expression, expressed in testis, colon, bone marrow, brain, thymus and to a lesser extent in heart, kidney, skeletal muscle and spleen.

It localises to the nucleus. In terms of biological role, catalytic subunit of the SLX1-SLX4 structure-specific endonuclease that resolves DNA secondary structures generated during DNA repair and recombination. Has endonuclease activity towards branched DNA substrates, introducing single-strand cuts in duplex DNA close to junctions with ss-DNA. Has a preference for 5'-flap structures, and promotes symmetrical cleavage of static and migrating Holliday junctions (HJs). Resolves HJs by generating two pairs of ligatable, nicked duplex products. In Mus musculus (Mouse), this protein is Structure-specific endonuclease subunit SLX1 (Slx1b).